A 380-amino-acid polypeptide reads, in one-letter code: Cytochrome b (380 aa).

4 helical membrane-spanning segments follow: residues 33-53 (FGSL…FLAM), 77-98 (WLIR…FIHV), 113-133 (WNIG…GYVL), and 178-198 (FFAF…VHLL). Heme b contacts are provided by His83 and His97. Residues His182 and His196 each coordinate heme b. His201 lines the a ubiquinone pocket. 4 consecutive transmembrane segments (helical) span residues 226–246 (IKDL…VLFF), 288–308 (LGGV…PFLN), 320–340 (ITQF…WIGG), and 347–367 (FTTI…VLMP).

Belongs to the cytochrome b family. In terms of assembly, the cytochrome bc1 complex contains 11 subunits: 3 respiratory subunits (MT-CYB, CYC1 and UQCRFS1), 2 core proteins (UQCRC1 and UQCRC2) and 6 low-molecular weight proteins (UQCRH/QCR6, UQCRB/QCR7, UQCRQ/QCR8, UQCR10/QCR9, UQCR11/QCR10 and a cleavage product of UQCRFS1). This cytochrome bc1 complex then forms a dimer. Heme b is required as a cofactor.

It is found in the mitochondrion inner membrane. In terms of biological role, component of the ubiquinol-cytochrome c reductase complex (complex III or cytochrome b-c1 complex) that is part of the mitochondrial respiratory chain. The b-c1 complex mediates electron transfer from ubiquinol to cytochrome c. Contributes to the generation of a proton gradient across the mitochondrial membrane that is then used for ATP synthesis. The sequence is that of Cytochrome b (MT-CYB) from Thomasomys ischyrus (Strong-tailed oldfield mouse).